Reading from the N-terminus, the 356-residue chain is Glutamine synthetase cytosolic isozyme 1-4 (356 aa).

At serine 2 the chain carries N-acetylserine. Residues serine 2 and serine 48 each carry the phosphoserine modification. Residues 19-99 (IIAEYIWIGG…VMCDAYTPAG (81 aa)) form the GS beta-grasp domain. Residues 37 to 66 (ARTLPGPVTDPSQLPKWNYDGSSTGQAPGD) are disordered. The 251-residue stretch at 106–356 (KRHAAAKIFE…IAESTILWKP (251 aa)) folds into the GS catalytic domain.

It belongs to the glutamine synthetase family. In terms of assembly, homooctamer. Interacts with GRF3. Expressed in the pericycle in the region of lateral root emergence.

It localises to the cytoplasm. It carries out the reaction L-glutamate + NH4(+) + ATP = L-glutamine + ADP + phosphate + H(+). Its function is as follows. High-affinity glutamine synthetase. May contribute to the homeostatic control of glutamine synthesis in roots. The protein is Glutamine synthetase cytosolic isozyme 1-4 of Arabidopsis thaliana (Mouse-ear cress).